Here is a 445-residue protein sequence, read N- to C-terminus: Proline--tRNA ligase (445 aa).

Belongs to the class-II aminoacyl-tRNA synthetase family. ProS type 2 subfamily. As to quaternary structure, homodimer.

The protein resides in the cytoplasm. It catalyses the reaction tRNA(Pro) + L-proline + ATP = L-prolyl-tRNA(Pro) + AMP + diphosphate. In terms of biological role, catalyzes the attachment of proline to tRNA(Pro) in a two-step reaction: proline is first activated by ATP to form Pro-AMP and then transferred to the acceptor end of tRNA(Pro). The polypeptide is Proline--tRNA ligase (Cereibacter sphaeroides (strain ATCC 17029 / ATH 2.4.9) (Rhodobacter sphaeroides)).